The sequence spans 447 residues: Putative branched-chain amino acid carrier protein SAR1419 (447 aa).

12 helical membrane passes run 6-26 (WVIG…IFPP), 40-60 (ILAF…VGAL), 74-94 (PKFS…LFAI), 114-134 (SSIA…YICL), 143-163 (IGSL…IKAY), 193-213 (GYLT…VNAV), 229-249 (LTAG…LGYI), 290-310 (LLGI…IVAV), 326-346 (FVLV…NAVI), 350-370 (IPVL…ILIA), 382-402 (IPVI…LGWL), and 417-437 (LEWF…GIFV).

This sequence belongs to the branched chain amino acid transporter family.

The protein resides in the cell membrane. In terms of biological role, component of the transport system for branched-chain amino acids (leucine, isoleucine and valine), which is coupled to a proton motive force (Potential). Contributes to NaCl tolerance. This is Putative branched-chain amino acid carrier protein SAR1419 from Staphylococcus aureus (strain MRSA252).